Here is a 199-residue protein sequence, read N- to C-terminus: Female-specific protein transformer (199 aa).

2 disordered regions span residues 1–121 (MDAD…RTPR) and 178–199 (YRAG…QAPN). Over residues 20 to 37 (REKMPYFADEVRERDRVR) the composition is skewed to basic and acidic residues. Composition is skewed to basic residues over residues 56–69 (RRSR…RSRT), 77–92 (CQRR…RSGS), and 102–119 (SRRR…RSRT).

Its subcellular location is the nucleus speckle. Its function is as follows. Member of the regulatory pathway controlling female somatic sexual differentiation, regulated by Sxl. Activates dsx female-specific splicing by promoting the formation of a splicing enhancer complex which consists of tra, tra2 and sr proteins. The chain is Female-specific protein transformer (tra) from Drosophila virilis (Fruit fly).